Consider the following 394-residue polypeptide: 1-deoxy-D-xylulose 5-phosphate reductoisomerase (394 aa).

Positions 12, 13, 14, 15, 38, 41, and 132 each coordinate NADPH. K133 is a 1-deoxy-D-xylulose 5-phosphate binding site. E134 contributes to the NADPH binding site. Residue D156 coordinates Mn(2+). 1-deoxy-D-xylulose 5-phosphate contacts are provided by S157, E158, S182, and H205. E158 provides a ligand contact to Mn(2+). G211 is a binding site for NADPH. S218, N223, K224, and E227 together coordinate 1-deoxy-D-xylulose 5-phosphate. Mn(2+) is bound at residue E227.

This sequence belongs to the DXR family. Mg(2+) is required as a cofactor. The cofactor is Mn(2+).

It carries out the reaction 2-C-methyl-D-erythritol 4-phosphate + NADP(+) = 1-deoxy-D-xylulose 5-phosphate + NADPH + H(+). The protein operates within isoprenoid biosynthesis; isopentenyl diphosphate biosynthesis via DXP pathway; isopentenyl diphosphate from 1-deoxy-D-xylulose 5-phosphate: step 1/6. Functionally, catalyzes the NADPH-dependent rearrangement and reduction of 1-deoxy-D-xylulose-5-phosphate (DXP) to 2-C-methyl-D-erythritol 4-phosphate (MEP). The protein is 1-deoxy-D-xylulose 5-phosphate reductoisomerase of Arthrobacter sp. (strain FB24).